A 512-amino-acid chain; its full sequence is Probable cytosol aminopeptidase (512 aa).

Residues K281 and D286 each coordinate Mn(2+). K293 is a catalytic residue. Residues D304, D363, and E365 each contribute to the Mn(2+) site. R367 is a catalytic residue.

This sequence belongs to the peptidase M17 family. The cofactor is Mn(2+).

Its subcellular location is the cytoplasm. The catalysed reaction is Release of an N-terminal amino acid, Xaa-|-Yaa-, in which Xaa is preferably Leu, but may be other amino acids including Pro although not Arg or Lys, and Yaa may be Pro. Amino acid amides and methyl esters are also readily hydrolyzed, but rates on arylamides are exceedingly low.. It catalyses the reaction Release of an N-terminal amino acid, preferentially leucine, but not glutamic or aspartic acids.. Presumably involved in the processing and regular turnover of intracellular proteins. Catalyzes the removal of unsubstituted N-terminal amino acids from various peptides. This chain is Probable cytosol aminopeptidase, found in Koribacter versatilis (strain Ellin345).